A 361-amino-acid chain; its full sequence is MMSLSTTLKPLSHFSPFVKRHNPKTNNTLFTLDTHNFTNSFWSKRGGSVSHRKHTVVAVYEAPDHVESSWRRLLSEVVVVRTKRSFWERSWTSWDVSKLVIFVGTHLLSLLAPFYFSWEAFWVFPWLVFINGICITLSYHRNLSHRSFDLPKWLEYLFAYGGVLAFQGDPIEWVSNHRYHHKHCETQRDPHSPTQGFWFSHMAWIFDTSSILENCGGEENVDDLVRQPFYRFLQRTVLLHMMAYSFLFYFCGGMPLLVWGIGITIAVRLHLTFLVNSVCHIWGTRAWNTSDFSKNNWWVAILTLGEGWHNNHHAFEFSARHGLEWWQLDITWCLIRFLEAIGLATNVKLPTETQMKGKALV.

A chloroplast-targeting transit peptide spans 1 to 57 (MMSLSTTLKPLSHFSPFVKRHNPKTNNTLFTLDTHNFTNSFWSKRGGSVSHRKHTVV). 2 consecutive transmembrane segments (helical) span residues 99 to 118 (LVIFVGTHLLSLLAPFYFSW) and 122 to 139 (WVFPWLVFINGICITLSY). The Histidine box-1 motif lies at 140 to 145 (HRNLSH). The Histidine box-2 signature appears at 177–181 (HRYHH). A helical transmembrane segment spans residues 246 to 266 (FLFYFCGGMPLLVWGIGITIA). The Histidine box-3 signature appears at 309–313 (HNNHH).

It belongs to the fatty acid desaturase type 1 family. It depends on Fe(2+) as a cofactor.

The protein localises to the plastid. It localises to the chloroplast membrane. It functions in the pathway lipid metabolism; polyunsaturated fatty acid biosynthesis. In Arabidopsis thaliana (Mouse-ear cress), this protein is Probable lipid desaturase ADS3.2, chloroplastic.